Here is a 258-residue protein sequence, read N- to C-terminus: 1-(5-phosphoribosyl)-5-[(5-phosphoribosylamino)methylideneamino] imidazole-4-carboxamide isomerase (258 aa).

The active-site Proton acceptor is Asp-17. Residue Asp-136 is the Proton donor of the active site.

This sequence belongs to the HisA/HisF family.

The protein localises to the cytoplasm. It catalyses the reaction 1-(5-phospho-beta-D-ribosyl)-5-[(5-phospho-beta-D-ribosylamino)methylideneamino]imidazole-4-carboxamide = 5-[(5-phospho-1-deoxy-D-ribulos-1-ylimino)methylamino]-1-(5-phospho-beta-D-ribosyl)imidazole-4-carboxamide. Its pathway is amino-acid biosynthesis; L-histidine biosynthesis; L-histidine from 5-phospho-alpha-D-ribose 1-diphosphate: step 4/9. The chain is 1-(5-phosphoribosyl)-5-[(5-phosphoribosylamino)methylideneamino] imidazole-4-carboxamide isomerase from Corynebacterium jeikeium (strain K411).